The following is a 225-amino-acid chain: Histone-arginine methyltransferase METTL23 (225 aa).

Belongs to the methyltransferase superfamily. METTL23 family. Interacts with HSPA5, HSP90B1, TUBULIN, UGGT1 and UGGT2. Interacts with TET3. Interacts with STPG4.

It localises to the nucleus. It is found in the cytoplasm. The enzyme catalyses L-arginyl-[protein] + 2 S-adenosyl-L-methionine = N(omega),N(omega)-dimethyl-L-arginyl-[protein] + 2 S-adenosyl-L-homocysteine + 2 H(+). In terms of biological role, histone methyltransferase that dimethylates histone H3 at 'Arg-17', forming asymmetric dimethylarginine (H3R17me2a), leading to activate transcription via chromatin remodeling. Maternal factor involved in epigenetic chromatin reprogramming of the paternal genome in the zygote: mediates H3R17me2a, promoting histone H3.3 incorporation in the male pronucleus, leading to TET3 recruitment and subsequent DNA demethylation. In Rattus norvegicus (Rat), this protein is Histone-arginine methyltransferase METTL23.